Here is a 226-residue protein sequence, read N- to C-terminus: 3-dehydroquinate dehydratase (226 aa).

3-dehydroquinate contacts are provided by residues 30 to 32 and Arg-62; that span reads EWR. Residue His-118 is the Proton donor/acceptor of the active site. Lys-143 (schiff-base intermediate with substrate) is an active-site residue. The 3-dehydroquinate site is built by Arg-186, Ser-205, and Gln-209.

It belongs to the type-I 3-dehydroquinase family. As to quaternary structure, homodimer.

The enzyme catalyses 3-dehydroquinate = 3-dehydroshikimate + H2O. The protein operates within metabolic intermediate biosynthesis; chorismate biosynthesis; chorismate from D-erythrose 4-phosphate and phosphoenolpyruvate: step 3/7. Involved in the third step of the chorismate pathway, which leads to the biosynthesis of aromatic amino acids. Catalyzes the cis-dehydration of 3-dehydroquinate (DHQ) and introduces the first double bond of the aromatic ring to yield 3-dehydroshikimate. In Streptococcus equi subsp. zooepidemicus (strain H70), this protein is 3-dehydroquinate dehydratase.